A 118-amino-acid chain; its full sequence is uncharacterized protein (118 aa).

The next 3 helical transmembrane spans lie at 6–26 (ILIL…PFMV), 43–63 (ALSC…IHVL), and 84–104 (IFKV…VLVQ).

The protein belongs to the AzlD/HI_1737/HP1330 family.

It localises to the cell membrane. This is an uncharacterized protein from Helicobacter pylori (strain J99 / ATCC 700824) (Campylobacter pylori J99).